The following is an 858-amino-acid chain: Zinc finger protein ZXDC (858 aa).

3 disordered regions span residues 1–73 (MDLP…GGDS), 85–108 (DTHG…PAAA), and 142–175 (AAPS…GSPA). Positions 59 to 68 (APGPSPPPPE) are enriched in pro residues. Positions 142-152 (AAPSLHPATTP) are enriched in low complexity. C2H2-type zinc fingers lie at residues 176-200 (YRCP…LLTH), 209-233 (FKCP…LQSH), 239-263 (FSCP…MKGH), 269-291 (FKCE…QRSH), 298-322 (YKCD…NRAH), 329-353 (FSCS…LRSH), 359-383 (FICD…KRKH), 389-413 (FTCP…SITH), 419-443 (FECP…SKKH), and 452-477 (SRCP…VRQH). Residues 624–634 (DSPALTPSNNL) are compositionally biased toward polar residues. The interval 624 to 652 (DSPALTPSNNLTAPGTTPTSSDTTQETGS) is disordered. The span at 635–651 (TAPGTTPTSSDTTQETG) shows a compositional bias: low complexity. Lysine 661 is covalently cross-linked (Glycyl lysine isopeptide (Lys-Gly) (interchain with G-Cter in SUMO)). Disordered stretches follow at residues 671–714 (DVVQ…LESG) and 727–751 (VKKK…KVKG). The segment covering 681–692 (GPSQSVLSSSTE) has biased composition (polar residues).

The protein belongs to the ZXD family. In terms of assembly, self-associates. Interacts with ZXDB and CIITA. In terms of processing, sumoylated at Lys-661 with SUMO1, SUMO2 and SUMO3; sumoylation enhances the activity of the transcriptional activation domain.

The protein resides in the nucleus. Functionally, cooperates with CIITA to promote transcription of MHC class I and MHC class II genes. This Mus musculus (Mouse) protein is Zinc finger protein ZXDC (Zxdc).